The primary structure comprises 86 residues: Small ribosomal subunit protein bS16 (86 aa).

It belongs to the bacterial ribosomal protein bS16 family.

The protein is Small ribosomal subunit protein bS16 of Xylella fastidiosa (strain M12).